Reading from the N-terminus, the 213-residue chain is Protein Flattop (213 aa).

Residues 127-213 are disordered; that stretch reads VDQPAEQSKI…HNSRPASQEK (87 aa). Over residues 151-213 the composition is skewed to polar residues; sequence QHIQDQSRPA…HNSRPASQEK (63 aa).

Belongs to the Flattop family.

The protein resides in the cytoplasm. The protein localises to the cytoskeleton. It localises to the cilium basal body. It is found in the cell projection. Its subcellular location is the cilium. The protein resides in the apical cell membrane. The protein localises to the cilium axoneme. Its function is as follows. Microtubule inner protein (MIP) part of the dynein-decorated doublet microtubules (DMTs) in cilia axoneme. Acts as a regulator of cilium basal body docking and positioning in mono- and multiciliated cells. Regulates basal body docking and cilia formation in multiciliated lung cells. Regulates kinocilium positioning and stereocilia bundle morphogenesis in the inner ear. The protein is Protein Flattop of Danio rerio (Zebrafish).